A 217-amino-acid chain; its full sequence is MCYSKINNSLRKRFRTFYPVVIDIETAGFNPETDAILEIAIITLKMNEFGLLEKEHLLHFHIQPFKGSRIDKKAIEFHGIDPFSPLRRAISEYEALYSIFNLIHKGIKSNNCTKSIIVAHNAIFDYNFLTAAITRTKIKNNPFHSFVIFDTATLSGLAVGQTVLARACKAIGLTFDNNQAHSALYDTQQTANLFCKIVNRWKTLGGWPPNDTRTIKL.

The 175-residue stretch at 20–194 folds into the Exonuclease domain; sequence VVIDIETAGF…YDTQQTANLF (175 aa). Positions 23, 25, 181, and 186 each coordinate Mg(2+). His181 functions as the Proton donor/acceptor in the catalytic mechanism.

It belongs to the RNase T family. Homodimer. Mg(2+) serves as cofactor.

Trims short 3' overhangs of a variety of RNA species, leaving a one or two nucleotide 3' overhang. Responsible for the end-turnover of tRNA: specifically removes the terminal AMP residue from uncharged tRNA (tRNA-C-C-A). Also appears to be involved in tRNA biosynthesis. This chain is Ribonuclease T, found in Buchnera aphidicola subsp. Baizongia pistaciae (strain Bp).